The following is a 101-amino-acid chain: Small ribosomal subunit protein uS14 (101 aa).

This sequence belongs to the universal ribosomal protein uS14 family. As to quaternary structure, part of the 30S ribosomal subunit. Contacts proteins S3 and S10.

In terms of biological role, binds 16S rRNA, required for the assembly of 30S particles and may also be responsible for determining the conformation of the 16S rRNA at the A site. This Haemophilus influenzae (strain PittGG) protein is Small ribosomal subunit protein uS14.